The primary structure comprises 329 residues: DNA-directed RNA polymerase subunit alpha (329 aa).

The tract at residues 1–234 is alpha N-terminal domain (alpha-NTD); that stretch reads MSGSVTEFLK…EQLDAFVELR (234 aa). Residues 248-329 are alpha C-terminal domain (alpha-CTD); it reads FDPILLRPVD…WPPESIAEKD (82 aa).

This sequence belongs to the RNA polymerase alpha chain family. As to quaternary structure, homodimer. The RNAP catalytic core consists of 2 alpha, 1 beta, 1 beta' and 1 omega subunit. When a sigma factor is associated with the core the holoenzyme is formed, which can initiate transcription.

The enzyme catalyses RNA(n) + a ribonucleoside 5'-triphosphate = RNA(n+1) + diphosphate. In terms of biological role, DNA-dependent RNA polymerase catalyzes the transcription of DNA into RNA using the four ribonucleoside triphosphates as substrates. The sequence is that of DNA-directed RNA polymerase subunit alpha from Pseudoalteromonas atlantica (strain T6c / ATCC BAA-1087).